The primary structure comprises 208 residues: ATP-dependent Clp protease proteolytic subunit (208 aa).

The active-site Nucleophile is the Ser98. His123 is a catalytic residue.

It belongs to the peptidase S14 family. In terms of assembly, fourteen ClpP subunits assemble into 2 heptameric rings which stack back to back to give a disk-like structure with a central cavity, resembling the structure of eukaryotic proteasomes.

Its subcellular location is the cytoplasm. It carries out the reaction Hydrolysis of proteins to small peptides in the presence of ATP and magnesium. alpha-casein is the usual test substrate. In the absence of ATP, only oligopeptides shorter than five residues are hydrolyzed (such as succinyl-Leu-Tyr-|-NHMec, and Leu-Tyr-Leu-|-Tyr-Trp, in which cleavage of the -Tyr-|-Leu- and -Tyr-|-Trp bonds also occurs).. Functionally, cleaves peptides in various proteins in a process that requires ATP hydrolysis. Has a chymotrypsin-like activity. Plays a major role in the degradation of misfolded proteins. The protein is ATP-dependent Clp protease proteolytic subunit of Wolbachia sp. subsp. Drosophila simulans (strain wRi).